The following is a 310-amino-acid chain: Aspartate carbamoyltransferase catalytic subunit (310 aa).

The carbamoyl phosphate site is built by Arg-58 and Thr-59. Lys-86 contacts L-aspartate. Carbamoyl phosphate contacts are provided by Arg-108, His-137, and Gln-140. L-aspartate is bound by residues Arg-170 and Arg-225. Gly-264 and Pro-265 together coordinate carbamoyl phosphate.

This sequence belongs to the aspartate/ornithine carbamoyltransferase superfamily. ATCase family. In terms of assembly, heterododecamer (2C3:3R2) of six catalytic PyrB chains organized as two trimers (C3), and six regulatory PyrI chains organized as three dimers (R2).

It carries out the reaction carbamoyl phosphate + L-aspartate = N-carbamoyl-L-aspartate + phosphate + H(+). The protein operates within pyrimidine metabolism; UMP biosynthesis via de novo pathway; (S)-dihydroorotate from bicarbonate: step 2/3. In terms of biological role, catalyzes the condensation of carbamoyl phosphate and aspartate to form carbamoyl aspartate and inorganic phosphate, the committed step in the de novo pyrimidine nucleotide biosynthesis pathway. This Coxiella burnetii (strain CbuG_Q212) (Coxiella burnetii (strain Q212)) protein is Aspartate carbamoyltransferase catalytic subunit.